Consider the following 799-residue polypeptide: Phenylalanine--tRNA ligase beta subunit (799 aa).

In terms of domain architecture, tRNA-binding spans 39–150; the sequence is GKGFSGVIVG…EHLQAGTALN (112 aa). Positions 402–478 constitute a B5 domain; that stretch reads FLELTIRCRL…RIYGYDHIPR (77 aa). Mg(2+)-binding residues include D456, D462, E465, and E466. Positions 705-798 constitute an FDX-ACB domain; the sequence is AIYPGSERDW…VSQKFANDLK (94 aa).

This sequence belongs to the phenylalanyl-tRNA synthetase beta subunit family. Type 1 subfamily. Tetramer of two alpha and two beta subunits. It depends on Mg(2+) as a cofactor.

The protein localises to the cytoplasm. It catalyses the reaction tRNA(Phe) + L-phenylalanine + ATP = L-phenylalanyl-tRNA(Phe) + AMP + diphosphate + H(+). In Protochlamydia amoebophila (strain UWE25), this protein is Phenylalanine--tRNA ligase beta subunit.